The chain runs to 438 residues: 3-phosphoshikimate 1-carboxyvinyltransferase (438 aa).

3-phosphoshikimate is bound by residues Lys23, Ser24, and Arg28. Lys23 provides a ligand contact to phosphoenolpyruvate. 2 residues coordinate phosphoenolpyruvate: Gly94 and Arg122. The 3-phosphoshikimate site is built by Ser167, Gln169, Asp321, and Lys348. A phosphoenolpyruvate-binding site is contributed by Gln169. Asp321 (proton acceptor) is an active-site residue. Phosphoenolpyruvate contacts are provided by Arg352 and Arg393.

The protein belongs to the EPSP synthase family. In terms of assembly, monomer.

It is found in the cytoplasm. It catalyses the reaction 3-phosphoshikimate + phosphoenolpyruvate = 5-O-(1-carboxyvinyl)-3-phosphoshikimate + phosphate. It functions in the pathway metabolic intermediate biosynthesis; chorismate biosynthesis; chorismate from D-erythrose 4-phosphate and phosphoenolpyruvate: step 6/7. In terms of biological role, catalyzes the transfer of the enolpyruvyl moiety of phosphoenolpyruvate (PEP) to the 5-hydroxyl of shikimate-3-phosphate (S3P) to produce enolpyruvyl shikimate-3-phosphate and inorganic phosphate. The chain is 3-phosphoshikimate 1-carboxyvinyltransferase from Helicobacter hepaticus (strain ATCC 51449 / 3B1).